The primary structure comprises 203 residues: RNA annealing protein YRA2 (203 aa).

Met1 carries the N-acetylmethionine modification. Disordered stretches follow at residues 1–60 (MDKA…REEP) and 137–203 (QPQR…YMKG). Polar residues predominate over residues 11–20 (NSHTDSSSNH). The span at 47 to 60 (SRSKDRLYREREEP) shows a compositional bias: basic and acidic residues. An RRM domain is found at 64-138 (KRIRISKIPL…AKIEVEIYQP (75 aa)). Basic residues-rich tracts occupy residues 139–153 (QRKHSRMNAHNRRKQ) and 161–180 (GRPGSHYRQKPNRVSKKNKG).

It belongs to the YRA1 family. Associates with mRNPs. Interacts with YRA1.

The protein localises to the nucleus. In terms of biological role, involved in export of poly(A) mRNAs from the nucleus. Recruited to the coding sequences as well as poly-A sites of active genes. The polypeptide is RNA annealing protein YRA2 (YRA2) (Saccharomyces cerevisiae (strain JAY291) (Baker's yeast)).